We begin with the raw amino-acid sequence, 518 residues long: Sugar transport protein MST3 (518 aa).

Residues 1–18 (MAGGAVVSTGAGKDYPGK) are Cytoplasmic-facing. A helical membrane pass occupies residues 19–39 (LTLFVFFTCVVAATGGLIFGY). Residues 40 to 80 (DIGISGGVTSMDPFLRKFFPEVYRKKQMADKNNQYCKYDNQ) lie on the Extracellular side of the membrane. The chain crosses the membrane as a helical span at residues 81–101 (LLQTFTSSLYLAALVSSFFAA). At 102-117 (TVTRVLGRKWSMFAGG) the chain is on the cytoplasmic side. The helical transmembrane segment at 118–138 (LTFLIGAALNGAAENVAMLIV) threads the bilayer. Topologically, residues 139–140 (GR) are extracellular. A helical membrane pass occupies residues 141 to 161 (ILLGVGVGFANQSVPVYLSEM). The Cytoplasmic portion of the chain corresponds to 162–167 (APARLR). Residues 168–188 (GMLNIGFQLMITIGILAAELI) form a helical membrane-spanning segment. Residues 189 to 202 (NYGTAKIKAGWGWR) lie on the Extracellular side of the membrane. The chain crosses the membrane as a helical span at residues 203–223 (VSLALAAVPAAIITLGSLFLP). Residues 224–290 (DTPNSLIDRG…YRAQLTMAIC (67 aa)) lie on the Cytoplasmic side of the membrane. The chain crosses the membrane as a helical span at residues 291-311 (IPFFQQLTGINVIMFYAPVLF). Over 312 to 322 (DTLGFKSDASL) the chain is Extracellular. A helical transmembrane segment spans residues 323–343 (MSAVITGLVNVFATLVSIFTV). Topologically, residues 344–351 (DRLGRRKL) are cytoplasmic. The helical transmembrane segment at 352 to 372 (FLQGGAQMVVCQVVVGTLIAV) threads the bilayer. Over 373-387 (KFGTSGIGDIPKGYA) the chain is Extracellular. A helical membrane pass occupies residues 388 to 408 (AVVVLFICMYVAGFAWSWGPL). Over 409–427 (GWLVPSEIFPLEIRPAGQS) the chain is Cytoplasmic. A helical membrane pass occupies residues 428–448 (INVSVNMLFTFVIAQAFLTML). Over 449–452 (CHMK) the chain is Extracellular. Residues 453–473 (FGLFYFFAGWVVIMTVFIALF) form a helical membrane-spanning segment. The Cytoplasmic segment spans residues 474-518 (LPETKNVPIEEMVLVWKSHWFWRRFIGDHDVHVGANHVSNNKLQP).

The protein belongs to the major facilitator superfamily. Sugar transporter (TC 2.A.1.1) family. Highly expressed in roots. Expressed in xylem and sclerenchyma cells of roots. Expressed at low levels in leaves.

It localises to the membrane. Functionally, mediates active uptake of hexoses by sugar:proton symport. Can transport glucose, xylose and 3-O-methylglucose. May be involved in the accumulation of monosaccharides required for cell wall synthesis during root development. The protein is Sugar transport protein MST3 of Oryza sativa subsp. japonica (Rice).